Reading from the N-terminus, the 458-residue chain is Phosphoglucosamine mutase (458 aa).

Catalysis depends on S106, which acts as the Phosphoserine intermediate. Mg(2+)-binding residues include S106, D247, D249, and D251. S106 carries the post-translational modification Phosphoserine.

It belongs to the phosphohexose mutase family. Mg(2+) is required as a cofactor. Activated by phosphorylation.

It catalyses the reaction alpha-D-glucosamine 1-phosphate = D-glucosamine 6-phosphate. Its function is as follows. Catalyzes the conversion of glucosamine-6-phosphate to glucosamine-1-phosphate. The chain is Phosphoglucosamine mutase from Chlamydia trachomatis serovar D (strain ATCC VR-885 / DSM 19411 / UW-3/Cx).